The following is a 450-amino-acid chain: 23S rRNA (uracil(1939)-C(5))-methyltransferase RlmD (450 aa).

The disordered stretch occupies residues 1-22 (MARNKGGLRFQPSGGARGPAIP). Residues 20–78 (AIPVGKKQRLTIERLAHDGRGIAHEAGMTWFVSGGLPGEELEARVLGARSKVVDARSER) form the TRAM domain. Positions 91, 97, 100, and 179 each coordinate [4Fe-4S] cluster. Residues glutamine 283, phenylalanine 312, asparagine 317, glutamate 333, aspartate 360, and aspartate 381 each coordinate S-adenosyl-L-methionine. The Nucleophile role is filled by cysteine 407.

This sequence belongs to the class I-like SAM-binding methyltransferase superfamily. RNA M5U methyltransferase family. RlmD subfamily.

The catalysed reaction is uridine(1939) in 23S rRNA + S-adenosyl-L-methionine = 5-methyluridine(1939) in 23S rRNA + S-adenosyl-L-homocysteine + H(+). Catalyzes the formation of 5-methyl-uridine at position 1939 (m5U1939) in 23S rRNA. The polypeptide is 23S rRNA (uracil(1939)-C(5))-methyltransferase RlmD (Pseudomonas aeruginosa (strain UCBPP-PA14)).